The following is a 412-amino-acid chain: MKIYLVGGAVRDALLGLPVKDRDWVVVGSTPQEMLDAGYQQVGRDFPVFLHPQTHEEYALARTERKSGSGYTGFTCYAAPDVTLEDDLKRRDLTINALAQDDNGEIIDPYNGLGDLQNRLLRHVSPAFGEDPLRVLRVARFAARYAHLGFRIADETLALMREMTHAGELEHLTPERVWKETESALTTRNPQVFFQVLRDCGALRVLFPEIDALFGVPAPARWHPEIDTGIHTLMTLSMAAMLSPQVDVRFATLCHDLGKGLTPPELWPRHHGHGPAGVKLVEQLCQRLRVPSEIRDLARLVAEFHDLIHTFPMLNPKTIVKLFDSIDAWRKPQRVEQLALTSEADVRGRTGFESADYPQGRWLREAWEVAQSVPTKAVVEAGFKGVGIREELTRRRIAAVASWKEQRCPKPD.

ATP contacts are provided by Gly8 and Arg11. The CTP site is built by Gly8 and Arg11. Asp21 and Asp23 together coordinate Mg(2+). Residues Arg91, Arg137, and Arg140 each contribute to the ATP site. CTP contacts are provided by Arg91, Arg137, and Arg140. Residues 228–329 enclose the HD domain; it reads TGIHTLMTLS…VKLFDSIDAW (102 aa).

It belongs to the tRNA nucleotidyltransferase/poly(A) polymerase family. Bacterial CCA-adding enzyme type 1 subfamily. In terms of assembly, monomer. Can also form homodimers and oligomers. It depends on Mg(2+) as a cofactor. Ni(2+) serves as cofactor.

The catalysed reaction is a tRNA precursor + 2 CTP + ATP = a tRNA with a 3' CCA end + 3 diphosphate. The enzyme catalyses a tRNA with a 3' CCA end + 2 CTP + ATP = a tRNA with a 3' CCACCA end + 3 diphosphate. Catalyzes the addition and repair of the essential 3'-terminal CCA sequence in tRNAs without using a nucleic acid template. Adds these three nucleotides in the order of C, C, and A to the tRNA nucleotide-73, using CTP and ATP as substrates and producing inorganic pyrophosphate. tRNA 3'-terminal CCA addition is required both for tRNA processing and repair. Also involved in tRNA surveillance by mediating tandem CCA addition to generate a CCACCA at the 3' terminus of unstable tRNAs. While stable tRNAs receive only 3'-terminal CCA, unstable tRNAs are marked with CCACCA and rapidly degraded. The sequence is that of Multifunctional CCA protein from Escherichia coli O6:K15:H31 (strain 536 / UPEC).